We begin with the raw amino-acid sequence, 147 residues long: Monothiol glutaredoxin-S5 (147 aa).

The Glutaredoxin domain maps to 49–146; the sequence is AAEVRRAVAE…PILKKAGALW (98 aa). [2Fe-2S] cluster is bound at residue Cys69. The Responsive for interaction with TGA factors motif lies at 144–147; the sequence is ALWL.

This sequence belongs to the glutaredoxin family. CC-type subfamily.

The protein localises to the cytoplasm. The protein resides in the nucleus. May only reduce GSH-thiol disulfides, but not protein disulfides. The protein is Monothiol glutaredoxin-S5 (GRXS5) of Oryza sativa subsp. japonica (Rice).